The sequence spans 345 residues: Phosphoribosylformylglycinamidine cyclo-ligase (345 aa).

It belongs to the AIR synthase family.

It localises to the cytoplasm. The catalysed reaction is 2-formamido-N(1)-(5-O-phospho-beta-D-ribosyl)acetamidine + ATP = 5-amino-1-(5-phospho-beta-D-ribosyl)imidazole + ADP + phosphate + H(+). Its pathway is purine metabolism; IMP biosynthesis via de novo pathway; 5-amino-1-(5-phospho-D-ribosyl)imidazole from N(2)-formyl-N(1)-(5-phospho-D-ribosyl)glycinamide: step 2/2. The protein is Phosphoribosylformylglycinamidine cyclo-ligase of Shewanella sp. (strain MR-7).